We begin with the raw amino-acid sequence, 546 residues long: MVVILDKRCYCNLLILILMISECSVGILHYEKLSKIGLVKGVTRKYKIKSNPLTKDIVIKMIPNVSNMSQCTGSVMENYKTRLNGILTPIKGALEIYKNNTHDLVGDVRLAGVIMAGVAIGIATAAQITAGVALYEAMKNADNINKLKSSIESTNEAVVKLQETAEKTVYVLTALQDYINTNLVPTIDKISCKQTELSLDLALSKYLSDLLFVFGPNLQDPVSNSMTIQAISQAFGGNYETLLRTLGYATEDFDDLLESDSITGQIIYVDLSSYYIIVRVYFPILTEIQQAYIQELLPVSFNNDNSEWISIVPNFILVRNTLISNIEIGFCLITKRSVICNQDYATPMTNNMRECLTGSTEKCPRELVVSSHVPRFALSNGVLFANCISVTCQCQTTGRAISQSGEQTLLMIDNTTCPTAVLGNVIISLGKYLGSVNYNSEGIAIGPPVFTDKVDISSQISSMNQSLQQSKDYIKEAQRLLDTVNPSLISMLSMIILYVLSIASLCIGLITFISFIIVEKKRNTYSRLEDRRVRPTSSGDLYYIGT.

The first 26 residues, 1 to 26, serve as a signal peptide directing secretion; sequence MVVILDKRCYCNLLILILMISECSVG. At 27–497 the chain is on the extracellular side; sequence ILHYEKLSKI…LISMLSMIIL (471 aa). Residues Asn-64, Asn-67, and Asn-99 are each glycosylated (N-linked (GlcNAc...) asparagine; by host). Disulfide bonds link Cys-71–Cys-192, Cys-331–Cys-340, Cys-355–Cys-363, Cys-387–Cys-392, and Cys-394–Cys-417. Positions 110-134 are fusion peptide; sequence LAGVIMAGVAIGIATAAQITAGVAL. Residues 135–163 adopt a coiled-coil conformation; it reads YEAMKNADNINKLKSSIESTNEAVVKLQE. 2 N-linked (GlcNAc...) asparagine; by host glycosylation sites follow: Asn-414 and Asn-464. The stretch at 459–484 forms a coiled coil; that stretch reads QISSMNQSLQQSKDYIKEAQRLLDTV. The helical transmembrane segment at 498 to 518 threads the bilayer; sequence YVLSIASLCIGLITFISFIIV. Residues 519–546 are Cytoplasmic-facing; it reads EKKRNTYSRLEDRRVRPTSSGDLYYIGT.

This sequence belongs to the paramyxoviruses fusion glycoprotein family. In terms of assembly, homotrimer; disulfide-linked F1-F2. Interacts with the Glycoprotein G; this interaction involves both head and stalk regions of glygoprotein G. In pre-fusion state, found as a dimer of trimer. The inactive precursor F0 is glycosylated and proteolytically cleaved into F1 and F2 to be functionally active. The cleavage is mediated by cellular proteases during the transport and maturation of the polypeptide.

The protein resides in the virion membrane. Its subcellular location is the host cell membrane. Class I viral fusion protein. Under the current model, the protein has at least 3 conformational states: pre-fusion native state, pre-hairpin intermediate state, and post-fusion hairpin state. During viral and plasma cell membrane fusion, the heptad repeat (HR) regions assume a trimer-of-hairpins structure, positioning the fusion peptide in close proximity to the C-terminal region of the ectodomain. The formation of this structure appears to drive apposition and subsequent fusion of viral and plasma cell membranes. Directs fusion of viral and cellular membranes leading to delivery of the nucleocapsid into the cytoplasm. This fusion is pH independent and occurs directly at the outer cell membrane. The trimer of F1-F2 (F protein) probably interacts with G at the virion surface. Upon G binding to its cellular receptor, the hydrophobic fusion peptide is unmasked and interacts with the cellular membrane, inducing the fusion between cell and virion membranes. Later in infection, F proteins expressed at the plasma membrane of infected cells could mediate fusion with adjacent cells to form syncytia, a cytopathic effect that could lead to tissue necrosis. This is Fusion glycoprotein F0 (F) from Cynopterus brachyotis (Lesser short-nosed fruit bat).